The sequence spans 863 residues: Valine--tRNA ligase (863 aa).

The 'HIGH' region signature appears at 43–53 (PYPTGSFHIGH). The short motif at 517–521 (KMSKS) is the 'KMSKS' region element. Position 520 (lysine 520) interacts with ATP.

It belongs to the class-I aminoacyl-tRNA synthetase family. ValS type 2 subfamily.

Its subcellular location is the cytoplasm. The enzyme catalyses tRNA(Val) + L-valine + ATP = L-valyl-tRNA(Val) + AMP + diphosphate. Its function is as follows. Catalyzes the attachment of valine to tRNA(Val). As ValRS can inadvertently accommodate and process structurally similar amino acids such as threonine, to avoid such errors, it has a 'posttransfer' editing activity that hydrolyzes mischarged Thr-tRNA(Val) in a tRNA-dependent manner. This chain is Valine--tRNA ligase, found in Archaeoglobus fulgidus (strain ATCC 49558 / DSM 4304 / JCM 9628 / NBRC 100126 / VC-16).